A 319-amino-acid polypeptide reads, in one-letter code: MMMEHEMATNRRPRAKRTPGDKLGKGGGDAALAPAADAEIPASSAPEPAAPISAPPAPVIKPVGGDAWASLLSGSPWSSPGAASPTEAALKPVMPSALAEAVANAPPEAAPFTELVSHWSPPFRRQPDREYEEINPAEAAIPVTAAAPEPEPEPVPEPEPEPEPEAAHDHAATETEGVTEMMTSDVELEIEIASDVEVVEAPAVIEPSPRPQAFSHSTAYAYPAEPAPAVETAAEAAPAGPAENPVKEVPVEDLFTGIFNVADSAVRGAIGASTDLLRDPKSLGGKLSVAGQSLVHSIKGRFNALLAPRHGAKSNGDEF.

Disordered regions lie at residues M1–V59 and A145–E176. Residues A30–I52 are compositionally biased toward low complexity. Residues P150–P164 show a composition bias toward acidic residues.

It belongs to the magnetosome MamJ protein family.

Its subcellular location is the magnetosome. In terms of biological role, regulates the dynamic behavior of MamK filaments; paralog MamJ also promotes MamK turnover. At least one other protein besides MamJ and LimJ is required for MamK turnover. Might connect magnetosomes to MamK filaments. This is MamJ paralog LimJ from Paramagnetospirillum magneticum (strain ATCC 700264 / AMB-1) (Magnetospirillum magneticum).